The primary structure comprises 159 residues: Peptide methionine sulfoxide reductase MsrB (159 aa).

Residues 22 to 144 enclose the MsrB domain; that stretch reads RERLEANLTA…NSVSLQFVKA (123 aa). Zn(2+) contacts are provided by Cys61, Cys64, Cys110, and Cys113. Cys133 serves as the catalytic Nucleophile.

The protein belongs to the MsrB Met sulfoxide reductase family. It depends on Zn(2+) as a cofactor.

The catalysed reaction is L-methionyl-[protein] + [thioredoxin]-disulfide + H2O = L-methionyl-(R)-S-oxide-[protein] + [thioredoxin]-dithiol. This is Peptide methionine sulfoxide reductase MsrB from Caulobacter vibrioides (strain ATCC 19089 / CIP 103742 / CB 15) (Caulobacter crescentus).